Here is an 89-residue protein sequence, read N- to C-terminus: Small ribosomal subunit protein uS15 (89 aa).

It belongs to the universal ribosomal protein uS15 family. In terms of assembly, part of the 30S ribosomal subunit. Forms a bridge to the 50S subunit in the 70S ribosome, contacting the 23S rRNA.

One of the primary rRNA binding proteins, it binds directly to 16S rRNA where it helps nucleate assembly of the platform of the 30S subunit by binding and bridging several RNA helices of the 16S rRNA. Its function is as follows. Forms an intersubunit bridge (bridge B4) with the 23S rRNA of the 50S subunit in the ribosome. This is Small ribosomal subunit protein uS15 from Staphylococcus carnosus (strain TM300).